Consider the following 114-residue polypeptide: Small ribosomal subunit protein uS17 (114 aa).

This sequence belongs to the universal ribosomal protein uS17 family. Part of the 30S ribosomal subunit.

One of the primary rRNA binding proteins, it binds specifically to the 5'-end of 16S ribosomal RNA. In Saccharolobus solfataricus (strain ATCC 35092 / DSM 1617 / JCM 11322 / P2) (Sulfolobus solfataricus), this protein is Small ribosomal subunit protein uS17.